The following is a 274-amino-acid chain: Type III pantothenate kinase (274 aa).

6–13 (DVRNTHTV) contacts ATP. Residue 109-112 (GADR) participates in substrate binding. The active-site Proton acceptor is the Asp-111. K(+) is bound at residue Asp-131. Ser-134 serves as a coordination point for ATP. Residue Thr-186 participates in substrate binding.

It belongs to the type III pantothenate kinase family. Homodimer. It depends on NH4(+) as a cofactor. K(+) serves as cofactor.

The protein localises to the cytoplasm. The catalysed reaction is (R)-pantothenate + ATP = (R)-4'-phosphopantothenate + ADP + H(+). It functions in the pathway cofactor biosynthesis; coenzyme A biosynthesis; CoA from (R)-pantothenate: step 1/5. Catalyzes the phosphorylation of pantothenate (Pan), the first step in CoA biosynthesis. The protein is Type III pantothenate kinase of Mycobacterium leprae (strain Br4923).